Reading from the N-terminus, the 294-residue chain is Nucleoside-specific channel-forming protein Tsx (294 aa).

The N-terminal stretch at 1–22 (MKKTLLAAGAVVALSTTFAAGA) is a signal peptide.

Belongs to the nucleoside-specific channel-forming outer membrane porin (Tsx) (TC 1.B.10) family.

The protein resides in the cell outer membrane. In terms of biological role, functions as a substrate-specific channel for nucleosides and deoxynucleosides. Also functions in albicidin uptake and as receptor for colicin K. Also is a receptor for several Tsx-specific bacteriophages. The chain is Nucleoside-specific channel-forming protein Tsx from Klebsiella pneumoniae.